The chain runs to 374 residues: Cell division protein DivIB (374 aa).

A disordered region spans residues 1–90 (MWKISNENDI…EEEHFADRLP (90 aa)). Over 1–103 (MWKISNENDI…KTRNKRLYRR (103 aa)) the chain is Cytoplasmic. Over residues 39–53 (YLKKQAEEAASKGEN) the composition is skewed to basic and acidic residues. The span at 56 to 75 (AEVTITLQEQSQEEPQQHLP) shows a compositional bias: polar residues. Residues 104-124 (LAFILTCLGTAILVALYFVSP) form a helical membrane-spanning segment. Over 125–374 (LSRLSEVTVS…GENQEVQQAE (250 aa)) the chain is Extracellular. Residues 126–197 (SRLSEVTVSG…NSFKIDIQEY (72 aa)) form the POTRA domain. The segment at 325–374 (KESEETGSEVSEDSAVENQEVVDPNAGVATDEANNGTPTNGENQEVQQAE) is disordered. Residues 326 to 339 (ESEETGSEVSEDSA) show a composition bias toward acidic residues. Over residues 356 to 374 (EANNGTPTNGENQEVQQAE) the composition is skewed to polar residues.

This sequence belongs to the FtsQ/DivIB family. DivIB subfamily.

It is found in the cell membrane. Its function is as follows. Cell division protein that may be involved in stabilizing or promoting the assembly of the division complex. The protein is Cell division protein DivIB of Enterococcus faecalis (strain ATCC 700802 / V583).